We begin with the raw amino-acid sequence, 80 residues long: Protein UL148A (80 aa).

Residues 10-30 form a helical membrane-spanning segment; that stretch reads WIPVCVVVVMTSVVLFAGLHV.

The protein localises to the host membrane. Functionally, plays a role in the down-regulation of the host NKG2D ligand MICA by utilizing the lysosomal pathway for its degradation. In turn, MICA reduction diminishes NK-cell killing of HCMV-infected cells. The protein is Protein UL148A (UL148A) of Human cytomegalovirus (strain Merlin) (HHV-5).